The following is a 1362-amino-acid chain: DNA-directed RNA polymerase subunit beta (1362 aa).

Belongs to the RNA polymerase beta chain family. The RNAP catalytic core consists of 2 alpha, 1 beta, 1 beta' and 1 omega subunit. When a sigma factor is associated with the core the holoenzyme is formed, which can initiate transcription.

It catalyses the reaction RNA(n) + a ribonucleoside 5'-triphosphate = RNA(n+1) + diphosphate. Functionally, DNA-dependent RNA polymerase catalyzes the transcription of DNA into RNA using the four ribonucleoside triphosphates as substrates. This chain is DNA-directed RNA polymerase subunit beta, found in Acinetobacter baumannii (strain AB307-0294).